The following is a 32-amino-acid chain: U5-ctenitoxin-Pn1a (32 aa).

Cystine bridges form between Cys-3/Cys-16, Cys-9/Cys-21, and Cys-15/Cys-30.

As to expression, expressed by the venom gland.

It is found in the secreted. Its function is as follows. Blocks voltage-gated sodium channels (Nav). Causes tail erection, scratching and a reduction in mobility at a dose level of 1.40 mg/mouse. The sequence is that of U5-ctenitoxin-Pn1a from Phoneutria nigriventer (Brazilian armed spider).